A 231-amino-acid chain; its full sequence is uncharacterized protein (231 aa).

An RCK N-terminal domain is found at 3-119 (RADFCIIGLG…RTMGIREALI (117 aa)). An RCK C-terminal domain is found at 134 to 221 (HGMETEIINL…VNQYLRYINP (88 aa)).

This is an uncharacterized protein from Mycoplasma pneumoniae (strain ATCC 29342 / M129 / Subtype 1) (Mycoplasmoides pneumoniae).